The sequence spans 395 residues: S-adenosylmethionine synthase (395 aa).

Residue H16 participates in ATP binding. Mg(2+) is bound at residue D18. E44 provides a ligand contact to K(+). 2 residues coordinate L-methionine: E57 and Q100. Residues 100–110 are flexible loop; it reads QSPDIAQGVDR. Residues 167–169, 233–234, D242, 248–249, A265, and K269 contribute to the ATP site; these read DAK, RF, and RK. D242 contacts L-methionine. An L-methionine-binding site is contributed by K273.

The protein belongs to the AdoMet synthase family. In terms of assembly, homotetramer; dimer of dimers. Mg(2+) serves as cofactor. The cofactor is K(+).

It is found in the cytoplasm. It catalyses the reaction L-methionine + ATP + H2O = S-adenosyl-L-methionine + phosphate + diphosphate. The protein operates within amino-acid biosynthesis; S-adenosyl-L-methionine biosynthesis; S-adenosyl-L-methionine from L-methionine: step 1/1. Functionally, catalyzes the formation of S-adenosylmethionine (AdoMet) from methionine and ATP. The overall synthetic reaction is composed of two sequential steps, AdoMet formation and the subsequent tripolyphosphate hydrolysis which occurs prior to release of AdoMet from the enzyme. The polypeptide is S-adenosylmethionine synthase (Burkholderia lata (strain ATCC 17760 / DSM 23089 / LMG 22485 / NCIMB 9086 / R18194 / 383)).